A 400-amino-acid polypeptide reads, in one-letter code: CCA-adding enzyme (400 aa).

Positions 27 and 30 each coordinate ATP. Residues glycine 27 and arginine 30 each contribute to the CTP site. Residues aspartate 40 and aspartate 42 each contribute to the Mg(2+) site. The ATP site is built by arginine 111, aspartate 154, arginine 157, arginine 160, and arginine 163. CTP is bound by residues arginine 111, aspartate 154, arginine 157, arginine 160, and arginine 163.

Belongs to the tRNA nucleotidyltransferase/poly(A) polymerase family. Bacterial CCA-adding enzyme type 3 subfamily. In terms of assembly, homodimer. Mg(2+) is required as a cofactor.

It catalyses the reaction a tRNA precursor + 2 CTP + ATP = a tRNA with a 3' CCA end + 3 diphosphate. It carries out the reaction a tRNA with a 3' CCA end + 2 CTP + ATP = a tRNA with a 3' CCACCA end + 3 diphosphate. Its function is as follows. Catalyzes the addition and repair of the essential 3'-terminal CCA sequence in tRNAs without using a nucleic acid template. Adds these three nucleotides in the order of C, C, and A to the tRNA nucleotide-73, using CTP and ATP as substrates and producing inorganic pyrophosphate. tRNA 3'-terminal CCA addition is required both for tRNA processing and repair. Also involved in tRNA surveillance by mediating tandem CCA addition to generate a CCACCA at the 3' terminus of unstable tRNAs. While stable tRNAs receive only 3'-terminal CCA, unstable tRNAs are marked with CCACCA and rapidly degraded. This chain is CCA-adding enzyme, found in Bacillus pumilus (strain SAFR-032).